The primary structure comprises 624 residues: Sulfite reductase [ferredoxin] (624 aa).

The 3'-(S-cysteinyl)-tyrosine (Tyr-Cys) cross-link spans 52–137; the sequence is YQQDNRDNRV…ENLGSTISAC (86 aa). The [4Fe-4S] cluster site is built by Cys-446, Cys-452, Cys-491, and Cys-495. Cys-495 lines the siroheme pocket.

The protein belongs to the nitrite and sulfite reductase 4Fe-4S domain family. Monomer. It depends on siroheme as a cofactor. [4Fe-4S] cluster serves as cofactor.

The catalysed reaction is hydrogen sulfide + 6 oxidized [2Fe-2S]-[ferredoxin] + 3 H2O = sulfite + 6 reduced [2Fe-2S]-[ferredoxin] + 7 H(+). Catalyzes the reduction of sulfite to sulfide, a step in the biosynthesis of sulfur-containing amino acids and cofactors. This is Sulfite reductase [ferredoxin] (sir) from Synechococcus elongatus (strain ATCC 33912 / PCC 7942 / FACHB-805) (Anacystis nidulans R2).